A 273-amino-acid polypeptide reads, in one-letter code: Inactive endochitinase At2g43600 (273 aa).

The signal sequence occupies residues 1–22; that stretch reads MTIKNVIFSLFILAILAETVFS. The Chitin-binding type-1 domain maps to 23–61; that stretch reads QNCMDTSCPGLKECCSRWGFCGTKDEYCGFFCFSGPCNI. Cystine bridges form between Cys25–Cys37, Cys30–Cys43, Cys36–Cys50, and Cys54–Cys59. Residues 78-273 form a catalytic region; it reads GKIETVITSA…GVTPDQGLDC (196 aa). A glycan (N-linked (GlcNAc...) asparagine) is linked at Asn99.

It belongs to the glycosyl hydrolase 19 family. Chitinase class I subfamily.

The sequence is that of Inactive endochitinase At2g43600 from Arabidopsis thaliana (Mouse-ear cress).